Here is a 198-residue protein sequence, read N- to C-terminus: Small ribosomal subunit protein uS11 (198 aa).

2 stretches are compositionally biased toward low complexity: residues 1–11 (MSGTEAGAGEP) and 19–58 (EAAQ…TAQP). Disordered stretches follow at residues 1–72 (MSGT…TPAD) and 178–198 (DVTP…GRRV). Over residues 187–198 (TRKKGGKRGRRV) the composition is skewed to basic residues.

The protein belongs to the universal ribosomal protein uS11 family. In terms of assembly, part of the 30S ribosomal subunit.

In terms of biological role, located on the platform of the 30S subunit. The polypeptide is Small ribosomal subunit protein uS11 (Cenarchaeum symbiosum (strain A)).